The following is a 253-amino-acid chain: 5-oxoprolinase subunit A (253 aa).

It belongs to the LamB/PxpA family. Forms a complex composed of PxpA, PxpB and PxpC.

It catalyses the reaction 5-oxo-L-proline + ATP + 2 H2O = L-glutamate + ADP + phosphate + H(+). Its function is as follows. Catalyzes the cleavage of 5-oxoproline to form L-glutamate coupled to the hydrolysis of ATP to ADP and inorganic phosphate. The protein is 5-oxoprolinase subunit A of Ruegeria pomeroyi (strain ATCC 700808 / DSM 15171 / DSS-3) (Silicibacter pomeroyi).